Here is a 92-residue protein sequence, read N- to C-terminus: Small ribosomal subunit protein uS19 (92 aa).

It belongs to the universal ribosomal protein uS19 family.

Its function is as follows. Protein S19 forms a complex with S13 that binds strongly to the 16S ribosomal RNA. This is Small ribosomal subunit protein uS19 (rpsS) from Rickettsia prowazekii (strain Madrid E).